Here is a 221-residue protein sequence, read N- to C-terminus: Ribosomal RNA small subunit methyltransferase G (221 aa).

S-adenosyl-L-methionine-binding positions include Gly85, Leu90, Ala138–Glu139, and Arg151.

Belongs to the methyltransferase superfamily. RNA methyltransferase RsmG family.

The protein resides in the cytoplasm. The catalysed reaction is guanosine(527) in 16S rRNA + S-adenosyl-L-methionine = N(7)-methylguanosine(527) in 16S rRNA + S-adenosyl-L-homocysteine. In terms of biological role, specifically methylates the N7 position of guanine in position 527 of 16S rRNA. This Caulobacter sp. (strain K31) protein is Ribosomal RNA small subunit methyltransferase G.